The sequence spans 123 residues: uncharacterized protein (123 aa).

The next 4 membrane-spanning stretches (helical) occupy residues 9–31, 38–56, 67–91, and 98–114; these read LLLR…WISF, VLTL…VFAV, VIAV…AALY, and VSIV…IISA.

The protein to E.coli YhgE.

It localises to the cell membrane. This is an uncharacterized protein from Bacillus subtilis (strain 168).